The following is a 93-amino-acid chain: Beta-defensin 128 (93 aa).

The N-terminal stretch at 1 to 18 (MKLFLVLIILLFEVLTDG) is a signal peptide. Intrachain disulfides connect cysteine 24–cysteine 52, cysteine 32–cysteine 46, and cysteine 36–cysteine 53.

It belongs to the beta-defensin family.

The protein localises to the secreted. Its function is as follows. Has antibacterial activity. This Macaca fascicularis (Crab-eating macaque) protein is Beta-defensin 128 (DEFB128).